The primary structure comprises 155 residues: Histone H2B.4 (155 aa).

Positions 1 to 28 (MAPKTKEEKPASEAVEPKAEAKPKAEKA) are enriched in basic and acidic residues. The segment at 1-62 (MAPKTKEEKP…GDKKKKKAKV (62 aa)) is disordered. Residues 29–40 (PKKKEKKAPAKK) show a composition bias toward basic residues. Residue Lys-151 forms a Glycyl lysine isopeptide (Lys-Gly) (interchain with G-Cter in ubiquitin) linkage.

This sequence belongs to the histone H2B family. The nucleosome is a histone octamer containing two molecules each of H2A, H2B, H3 and H4 assembled in one H3-H4 heterotetramer and two H2A-H2B heterodimers. The octamer wraps approximately 147 bp of DNA. Post-translationally, monoubiquitinated to form H2BK143ub1; may give a specific tag for epigenetic transcriptional activation.

The protein localises to the nucleus. The protein resides in the chromosome. Core component of nucleosome. Nucleosomes wrap and compact DNA into chromatin, limiting DNA accessibility to the cellular machineries which require DNA as a template. Histones thereby play a central role in transcription regulation, DNA repair, DNA replication and chromosomal stability. DNA accessibility is regulated via a complex set of post-translational modifications of histones, also called histone code, and nucleosome remodeling. In Volvox carteri (Green alga), this protein is Histone H2B.4.